Reading from the N-terminus, the 337-residue chain is Glyceraldehyde-3-phosphate dehydrogenase (337 aa).

NAD(+) contacts are provided by residues 12–13 (RI), aspartate 34, and arginine 79. D-glyceraldehyde 3-phosphate is bound by residues 150–152 (SCT), threonine 181, 210–211 (TG), and arginine 233. The active-site Nucleophile is cysteine 151. Asparagine 315 contributes to the NAD(+) binding site.

It belongs to the glyceraldehyde-3-phosphate dehydrogenase family. Homotetramer.

Its subcellular location is the cytoplasm. It catalyses the reaction D-glyceraldehyde 3-phosphate + phosphate + NAD(+) = (2R)-3-phospho-glyceroyl phosphate + NADH + H(+). It participates in carbohydrate degradation; glycolysis; pyruvate from D-glyceraldehyde 3-phosphate: step 1/5. The sequence is that of Glyceraldehyde-3-phosphate dehydrogenase from Cryphonectria parasitica (Chestnut blight fungus).